The primary structure comprises 276 residues: Large ribosomal subunit protein uL2 (276 aa).

The interval 219–276 is disordered; that stretch reads TVRGSAMNPNDHPHGGGEGRTSIGRPAPVTPWGKPALGYKTRDSKKASNKMIVSRRKK.

Belongs to the universal ribosomal protein uL2 family. As to quaternary structure, part of the 50S ribosomal subunit. Forms a bridge to the 30S subunit in the 70S ribosome.

Functionally, one of the primary rRNA binding proteins. Required for association of the 30S and 50S subunits to form the 70S ribosome, for tRNA binding and peptide bond formation. It has been suggested to have peptidyltransferase activity; this is somewhat controversial. Makes several contacts with the 16S rRNA in the 70S ribosome. This is Large ribosomal subunit protein uL2 from Alkaliphilus oremlandii (strain OhILAs) (Clostridium oremlandii (strain OhILAs)).